Consider the following 279-residue polypeptide: 2-dehydropantoate 2-reductase (279 aa).

NADP(+)-binding positions include 6–11, Lys-66, and Asn-86; that span reads GLGAVG. Catalysis depends on Lys-158, which acts as the Proton donor. Substrate contacts are provided by residues Lys-158, Asn-162, Asn-166, Asn-176, and 225–228; that span reads NLSS. Glu-240 provides a ligand contact to NADP(+).

It belongs to the ketopantoate reductase family.

The protein resides in the cytoplasm. The catalysed reaction is (R)-pantoate + NAD(+) = 2-dehydropantoate + NADH + H(+). The enzyme catalyses (R)-pantoate + NADP(+) = 2-dehydropantoate + NADPH + H(+). The protein operates within cofactor biosynthesis; coenzyme A biosynthesis. Functionally, catalyzes the NAD(P)H-dependent reduction of ketopantoate into pantoic acid. The protein is 2-dehydropantoate 2-reductase of Pyrobaculum aerophilum (strain ATCC 51768 / DSM 7523 / JCM 9630 / CIP 104966 / NBRC 100827 / IM2).